The sequence spans 8384 residues: Mucin-19 (8384 aa).

The signal sequence occupies residues 1–21 (MKLILWYLVVALWCFFKDVEA). 4 disordered regions span residues 33 to 197 (AASR…YGAG), 222 to 247 (SKAD…PDAG), 279 to 305 (GDTG…IDLG), and 332 to 467 (QEGF…PEAT). 2 stretches are compositionally biased toward low complexity: residues 35-48 (SRSG…SSSG) and 88-98 (GGFFNSSSSSG). A compositionally biased stretch (basic and acidic residues) spans 169–184 (DKSRERWDAGNSRSED). Over residues 187–197 (ADSTNTRYGAG) the composition is skewed to polar residues. The segment covering 279–299 (GDTGISSKTVEGNQTSSSGGS) has biased composition (polar residues). Residues 359–369 (GSDSSSSGDSS) are compositionally biased toward low complexity. The segment covering 370 to 381 (ARNGFENSSGIS) has biased composition (polar residues). 2 stretches are compositionally biased toward low complexity: residues 424 to 435 (SDSGGNTWSSDS) and 443 to 452 (TSSSEYSTSG). VWFD domains follow at residues 478-649 (GEIS…QHCN), 815-995 (GRCK…SSCI), and 1274-1447 (TICH…QECS). 8 disulfide bridges follow: Cys502–Cys648, Cys817–Cys952, Cys838–Cys994, Cys857–Cys865, Cys1276–Cys1411, Cys1298–Cys1446, Cys1307–Cys1408, and Cys1323–Cys1330. 27 disordered regions span residues 1680–1699 (TSSS…PFTT), 1732–2464 (AGTT…KSPG), 2484–2526 (LESE…TEGS), 2540–2827 (RPLD…MTGT), 2850–2917 (STVG…LGTI), 2984–3027 (VTTG…SGTT), 3075–3368 (GTTG…GKTG), 3386–3428 (TTRL…GKTG), 3585–3628 (ETTG…TNGL), 3667–3736 (GSSA…TGLP), 4105–4147 (TGSS…NGLS), 4187–4251 (SAGV…AEVT), 4315–4390 (GLSA…SARV), 4414–4455 (TGSS…TNGQ), 4510–4583 (TGTT…TGLP), 4790–4843 (TGTT…TGLP), 4895–4930 (SSAG…AGVT), 5130–5161 (TGTT…GVTG), 5429–5452 (VTGT…VTGK), 5464–5494 (GPSA…GTTG), 5880–5918 (GTSI…SAEM), 6069–6403 (TGKT…STES), 6440–6918 (GRAT…ETTK), 6953–7223 (GTSE…TGFK), 7250–7749 (SFST…SKTG), 7783–7975 (KNGS…EAGS), and 8020–8133 (SGRS…VSQP). Low complexity-rich tracts occupy residues 1732–1746 (AGTT…TGAA), 1772–1813 (PGEA…TTGP), and 1820–1833 (GATS…EGMS). The span at 1835–1860 (VTGQSLGSTAGSDSEITAKTSFTGSS) shows a compositional bias: polar residues. Over residues 1868-1879 (PSPGSPGHFSGG) the composition is skewed to low complexity. Residues 1880–1905 (TTEWGNVATTGAAGENTSGALGSTEG) show a composition bias toward polar residues. Residues 1909 to 1921 (ATTSAGSGNTAGT) are compositionally biased toward low complexity. Residues 1950–1968 (GSSTPGEADIGNTSFGKSG) are compositionally biased toward polar residues. Composition is skewed to low complexity over residues 1969-1983 (TPTV…SPVS) and 2013-2049 (GGKI…SGPS). Over residues 2055–2100 (NYGQSSEIPGTIKSSSDVSGTMGQSDTTSGPSVAVTRTSEQSSGVT) the composition is skewed to polar residues. 2 stretches are compositionally biased toward low complexity: residues 2132–2147 (TTGS…GPSS) and 2159–2170 (GSGTSGQSVTGS). Polar residues-rich tracts occupy residues 2171-2186 (RATG…TVSF) and 2209-2225 (GSGT…TTRL). Low complexity-rich tracts occupy residues 2233-2246 (TESS…TTPS) and 2280-2313 (SGPS…TKPS). Positions 2238–6086 (GVTGTTTPSA…GVTGTTGLSA (3849 aa)) are approximate repeats of G-V-T-G-T-T-G-P-S-A. Polar residues-rich tracts occupy residues 2316-2332 (RTGT…TTEP) and 2354-2372 (ATES…TTIP). Residues 2403-2419 (SSGGSGATRSSGGGMGT) show a composition bias toward gly residues. The segment covering 2420–2441 (TGQSTARSETTGPLFGLTGTFG) has biased composition (low complexity). The segment covering 2442 to 2460 (QSATVTGTSSNSAGVTTPE) has biased composition (polar residues). Composition is skewed to low complexity over residues 2512–2526 (SAGE…TEGS), 2545–2571 (GSGT…TTRK), and 2578–2589 (TTGLSGLTGTSG). Polar residues-rich tracts occupy residues 2595–2610 (TGTS…TSEK) and 2638–2653 (TRPS…QSAR). The segment covering 2654-2681 (VTETVGASAGVTGTTGPSTEGSGATGPS) has biased composition (low complexity). Polar residues-rich tracts occupy residues 2695–2748 (SGTT…TGTT) and 2755–2770 (TETT…TTGP). Positions 2787-2799 (ATRSSGGETETTG) are enriched in low complexity. Composition is skewed to polar residues over residues 2800–2827 (QSAV…MTGT), 2850–2859 (STVGLETTRP), and 2874–2892 (AQTT…QSAR). The segment covering 2894-2910 (TGASGPSVGVTGTTGPA) has biased composition (low complexity). Residues 2984 to 2998 (VTTGPSVTGVETTAK) show a composition bias toward polar residues. Residues 2999-3027 (TTSGGLSTTISSVGGTGTTGQSPERSGTT) show a composition bias toward low complexity. The segment covering 3099-3109 (PSITGSGTTRP) has biased composition (polar residues). A compositionally biased stretch (low complexity) spans 3114–3130 (SWTAGTSSGGHSTTSPS). A compositionally biased stretch (polar residues) spans 3131–3159 (VRGTETTGQSAAESVTTGPVTGYTETSGP). Residues 3172–3188 (TVTQTTGSSAAVSGTTV) are compositionally biased toward low complexity. The span at 3189 to 3224 (QSLTVSGTTRPSSGQTEITGSSVKESGTTESSAVRS) shows a compositional bias: polar residues. A compositionally biased stretch (low complexity) spans 3225 to 3277 (GTTGPTAGVTGTNGPSSAGVTGITGSSPGVTGTTGSSPGVTGTTGSSARSGTS). Composition is skewed to polar residues over residues 3303–3317 (ITGT…TGTT) and 3324–3362 (TGTT…SSAG). Residues 3390 to 3417 (SAGVTGTTGPSPGVTGTTGTPAGVTGTT) show a composition bias toward low complexity. Polar residues-rich tracts occupy residues 3702-3728 (VTGT…TTGP) and 4105-4116 (TGSSARSGTSIP). Residues 4117-4126 (SVGETGTTRT) are compositionally biased toward low complexity. A compositionally biased stretch (polar residues) spans 4320–4346 (VTGTTRPSAGVTGTTGQSAEVTGTTEP). Low complexity-rich tracts occupy residues 4347-4385 (SAGL…GTTG) and 4414-4426 (TGSS…STPS). Composition is skewed to low complexity over residues 5469-5494 (VTGT…GTTG) and 5889-5903 (TGTT…TTTG). Polar residues-rich tracts occupy residues 5908 to 5918 (ITGTNGLSAEM), 6071 to 6103 (KTRS…TTKT), and 6111 to 6121 (TRPSAGITATT). Over residues 6156–6168 (TTTGTTGVTTGTT) the composition is skewed to low complexity. Composition is skewed to polar residues over residues 6217–6248 (EVST…TATT) and 6257–6275 (APGS…SAST). Over residues 6284-6295 (TGSTRGVRTTGS) the composition is skewed to low complexity. Polar residues-rich tracts occupy residues 6303–6323 (GEFS…TTLT) and 6336–6346 (ESTTSLPQSAK). Over residues 6378-6389 (SGTTISSGGSHT) the composition is skewed to low complexity. 2 stretches are compositionally biased toward polar residues: residues 6440 to 6457 (GRAT…TSQA) and 6470 to 6503 (TTIT…TTYI). Positions 6507–6523 (GTTRGGLATATTGAFSG) are enriched in low complexity. Over residues 6560–6571 (TTFTSGGSHTEA) the composition is skewed to polar residues. Over residues 6581 to 6597 (TGTESRAATTRAAPGTT) the composition is skewed to low complexity. Over residues 6599 to 6608 (VPGSSNTGAT) the composition is skewed to polar residues. Positions 6612 to 6628 (GGSATTRGRITTATTGA) are enriched in low complexity. Polar residues-rich tracts occupy residues 6669-6680 (RITSGGSYTATT) and 6689-6698 (APGSSNTGAT). Over residues 6707–6718 (TRGRITTATTGA) the composition is skewed to low complexity. Residues 6752–6766 (TTLTGDRSSTGSESR) show a composition bias toward polar residues. Low complexity predominate over residues 6767–6781 (TATTGVAPGTTVAPG). Over residues 6794–6817 (SGTTNIGRATGATTSIVGSDTSQA) the composition is skewed to polar residues. The segment covering 6827–6842 (SPGASSTSQSSRPGTS) has biased composition (low complexity). The segment covering 6843–6875 (VTPDSSASESETVTTKEFSGTTAISRTSHTGTP) has biased composition (polar residues). Residues 6887–6901 (TATTGVAPGTTVAPG) show a composition bias toward low complexity. 2 stretches are compositionally biased toward polar residues: residues 6902–6911 (SSNTEATTSV) and 6953–6964 (GTSEVAPSTTVA). Residues 6966–6994 (GSFSTAATTSPGASGTTGVTTTTKTTTSL) show a composition bias toward low complexity. A compositionally biased stretch (polar residues) spans 7006–7041 (SATTGAPGSRTGTAGVPSATTVSPGSSNSEATTSVG). Over residues 7045–7074 (KTGAETITEATTSTEGTGTSGTGFKTGTSE) the composition is skewed to low complexity. The segment covering 7085 to 7094 (SFSTAATTSP) has biased composition (polar residues). Residues 7095–7112 (GASGMTGVTTTTKTTTSL) are compositionally biased toward low complexity. Over residues 7143–7158 (TRVTPGSSNSEATTSV) the composition is skewed to polar residues. Composition is skewed to low complexity over residues 7201-7215 (SGSS…TEGT) and 7250-7276 (SFST…TTSL). The segment covering 7293–7311 (SGTTVAPGSSNSEATTSVG) has biased composition (polar residues). The span at 7379-7397 (TTSTKGTGTSGTGFKTGTS) shows a compositional bias: low complexity. Positions 7403-7421 (TTVSPGSFSTATISPGASR) are enriched in polar residues. A compositionally biased stretch (low complexity) spans 7422–7435 (TTGAAPAAETTTSL). Residues 7465 to 7483 (SATTIAPGSSNSEATTSLG) are compositionally biased toward polar residues. Residues 7525–7537 (PLGGASGTSGGYV) show a composition bias toward gly residues. 2 stretches are compositionally biased toward polar residues: residues 7544–7557 (PTTS…SRTI) and 7571–7596 (AGTS…TSPG). Positions 7600-7613 (MTGVRTTSKTTTSL) are enriched in low complexity. 2 stretches are compositionally biased toward polar residues: residues 7642–7669 (SSRT…SGTG) and 7698–7708 (SFSTAATTSPG). Low complexity predominate over residues 7715-7732 (TGPTAETTTFLGGSSTTG). The segment covering 7783-7811 (KNGSMTTALGSQLSSSQTVIPGSSGTISH) has biased composition (polar residues). Positions 7812-7828 (TTVAPGSSVTGTTTGAS) are enriched in low complexity. The segment covering 7830-7851 (DQVTGSKTGTTGVALSTTVAPG) has biased composition (polar residues). Positions 7852-7861 (SSSTEATTST) are enriched in low complexity. A compositionally biased stretch (polar residues) spans 7862-7891 (GVHRTTVVGQKTGATTRGSAKQGTRSTIEA). Low complexity predominate over residues 7892-7917 (TTSFRGTGTTGSGMNTGTTGVVSGNT). Over residues 7918–7934 (ISPSSFNTEATSGTSER) the composition is skewed to polar residues. Residues 7938 to 7952 (GSEIGTTGIVSGTTV) show a composition bias toward low complexity. 4 stretches are compositionally biased toward polar residues: residues 7953–7965 (APGS…TTSL), 8020–8040 (SGRS…SGTT), 8048–8081 (TGNT…SISG), and 8110–8120 (ETGVQTGSTLV). One can recognise a VWFC domain in the interval 8159–8225 (PVCHGPLGEE…DTCCEIGYCE (67 aa)). Intrachain disulfides connect Cys8288–Cys8339, Cys8306–Cys8353, Cys8315–Cys8369, and Cys8319–Cys8371. The CTCK domain maps to 8288 to 8376 (CKNNCRSSLV…TTCSCLDICQ (89 aa)).

In terms of tissue distribution, expressed corneal epithelial cells, conjunctival goblet and epithelial cells and lacrimal gland cells (at protein level). Expressed by mucous cells of the submandibular gland and submucosal gland of the trachea. Expressed by middle ear epithelial cells.

The protein localises to the secreted. In terms of biological role, may function in ocular mucus homeostasis. This Homo sapiens (Human) protein is Mucin-19 (MUC19).